We begin with the raw amino-acid sequence, 362 residues long: Heat-inducible transcription repressor HrcA (362 aa).

The protein belongs to the HrcA family.

Functionally, negative regulator of class I heat shock genes (grpE-dnaK-dnaJ and groELS operons). Prevents heat-shock induction of these operons. The protein is Heat-inducible transcription repressor HrcA of Bradyrhizobium sp. (strain BTAi1 / ATCC BAA-1182).